The following is a 114-amino-acid chain: NTGAKAPRKQLANKAARKSTNVNAVSGVKKPHRFRPGTVALREIRRFQKSTELLIRKLPFQRLVREIAQEYKSDLRFQSQAVLALQEAAEAYLVGLFEDTNLCAIHAKRVTIMP.

The segment at 1-29 (NTGAKAPRKQLANKAARKSTNVNAVSGVK) is disordered.

The protein belongs to the histone H3 family. The nucleosome is a histone octamer containing two molecules each of H2A, H2B, H3 and H4 assembled in one H3-H4 heterotetramer and two H2A-H2B heterodimers. The octamer wraps approximately 147 bp of DNA.

Its subcellular location is the nucleus. It localises to the chromosome. Functionally, core component of nucleosome. Nucleosomes wrap and compact DNA into chromatin, limiting DNA accessibility to the cellular machineries which require DNA as a template. Histones thereby play a central role in transcription regulation, DNA repair, DNA replication and chromosomal stability. DNA accessibility is regulated via a complex set of post-translational modifications of histones, also called histone code, and nucleosome remodeling. This is Histone H3-5 (H3-5) from Stylonychia lemnae (Ciliate).